The primary structure comprises 139 residues: Small ribosomal subunit protein uS12 (139 aa).

The disordered stretch occupies residues 1-21 (MSTVSQLIKKRRSSKTSKTKA). Over residues 8-18 (IKKRRSSKTSK) the composition is skewed to basic residues.

The protein belongs to the universal ribosomal protein uS12 family. Part of the 30S ribosomal subunit. Contacts proteins S8 and S17. May interact with IF1 in the 30S initiation complex.

Functionally, with S4 and S5 plays an important role in translational accuracy. Interacts with and stabilizes bases of the 16S rRNA that are involved in tRNA selection in the A site and with the mRNA backbone. Located at the interface of the 30S and 50S subunits, it traverses the body of the 30S subunit contacting proteins on the other side and probably holding the rRNA structure together. The combined cluster of proteins S8, S12 and S17 appears to hold together the shoulder and platform of the 30S subunit. This Onion yellows phytoplasma (strain OY-M) protein is Small ribosomal subunit protein uS12.